We begin with the raw amino-acid sequence, 31 residues long: Scolopendra 20566.01 Da toxin (31 aa).

Belongs to the CRISP family. Venom allergen 5-like subfamily. Post-translationally, contains 3 disulfide bonds. As to expression, expressed by the venom gland.

Its subcellular location is the secreted. The chain is Scolopendra 20566.01 Da toxin from Scolopendra angulata (Barbados giant red centipede).